The sequence spans 348 residues: GMP reductase (348 aa).

108–131 (ADFQKTKDIMALSDELIFICVDIA) provides a ligand contact to NADP(+). Gly-181 and Gly-183 together coordinate K(+). Cys-186 serves as the catalytic Thioimidate intermediate. 216 to 239 (IIGDGGCSCAGDVSKAFGGGADFV) provides a ligand contact to NADP(+).

It belongs to the IMPDH/GMPR family. GuaC type 1 subfamily. Homotetramer.

It catalyses the reaction IMP + NH4(+) + NADP(+) = GMP + NADPH + 2 H(+). Catalyzes the irreversible NADPH-dependent deamination of GMP to IMP. It functions in the conversion of nucleobase, nucleoside and nucleotide derivatives of G to A nucleotides, and in maintaining the intracellular balance of A and G nucleotides. The chain is GMP reductase from Vibrio parahaemolyticus serotype O3:K6 (strain RIMD 2210633).